A 549-amino-acid polypeptide reads, in one-letter code: Glucose-6-phosphate isomerase (549 aa).

The active-site Proton donor is the glutamate 355. Active-site residues include histidine 386 and lysine 514.

It belongs to the GPI family.

The protein localises to the cytoplasm. It catalyses the reaction alpha-D-glucose 6-phosphate = beta-D-fructose 6-phosphate. The protein operates within carbohydrate biosynthesis; gluconeogenesis. Its pathway is carbohydrate degradation; glycolysis; D-glyceraldehyde 3-phosphate and glycerone phosphate from D-glucose: step 2/4. Catalyzes the reversible isomerization of glucose-6-phosphate to fructose-6-phosphate. The protein is Glucose-6-phosphate isomerase of Klebsiella pneumoniae subsp. pneumoniae (strain ATCC 700721 / MGH 78578).